The sequence spans 320 residues: Mycothiol acetyltransferase (320 aa).

N-acetyltransferase domains lie at 8–141 (SHLT…RSLR) and 152–320 (LQIR…AALA). Position 36 (glutamate 36) interacts with 1D-myo-inositol 2-(L-cysteinylamino)-2-deoxy-alpha-D-glucopyranoside. Acetyl-CoA-binding positions include 80-82 (LVV) and 88-93 (RRGIAT). 1D-myo-inositol 2-(L-cysteinylamino)-2-deoxy-alpha-D-glucopyranoside is bound by residues glutamate 179, lysine 229, and glutamate 239. Acetyl-CoA-binding positions include 243–245 (LGV) and 250–256 (QGRGLGR). Tyrosine 284 contacts 1D-myo-inositol 2-(L-cysteinylamino)-2-deoxy-alpha-D-glucopyranoside. Residue 289–294 (NIAAVR) coordinates acetyl-CoA.

It belongs to the acetyltransferase family. MshD subfamily. As to quaternary structure, monomer.

The enzyme catalyses 1D-myo-inositol 2-(L-cysteinylamino)-2-deoxy-alpha-D-glucopyranoside + acetyl-CoA = mycothiol + CoA + H(+). Functionally, catalyzes the transfer of acetyl from acetyl-CoA to desacetylmycothiol (Cys-GlcN-Ins) to form mycothiol. The protein is Mycothiol acetyltransferase of Mycobacterium ulcerans (strain Agy99).